The sequence spans 437 residues: MGSTLKHLLLLLLVLIRHVDSAAIVKSLPGLEGRLPFELETGYIGIGEEEDIQLFYYFIKSENNPKEDPLLLWLDGGPGCSSLGGLLFENGPVALKSAVYNGSNPSLFSTTYSWTKMANIIYLDQPVGSGFSYSRTPIGKSSDTSEVKRIHEFLQKWLSKHPQFFSNPFYVTGDSYSGMIVPALVQEISKGNYICCKHLINLQGYVLGNPITYAEHEKNYRIPFSHGMSLISDELYESLKRNCKGNYENVDPRNTKCVRLVEEYHKCTDKINTQHILIPDCDKKGHGITSPDCYYYLYFLIECWANNERVREALHVTKGTKGQWQRCNWTIPYDNNIISSVPYHMDNSINGYRSLIYSGDHDITMPFQATQAWIKSLNYSIVDDWRPWMINDQIAGYTRTYSNKMTFATVKGGGHTAEYLPNESSIMFQRWISGQPL.

Positions 1 to 21 are cleaved as a signal peptide; sequence MGSTLKHLLLLLLVLIRHVDS. 3 disulfide bridges follow: C80-C327, C243-C257, and C281-C293. N-linked (GlcNAc...) asparagine glycosylation occurs at N101. Residue S175 is part of the active site. Residue N328 is glycosylated (N-linked (GlcNAc...) asparagine). D362 is a catalytic residue. N378 carries an N-linked (GlcNAc...) asparagine glycan. H415 is an active-site residue. An N-linked (GlcNAc...) asparagine glycan is attached at N422.

The protein belongs to the peptidase S10 family. In terms of tissue distribution, expressed in senescent leaves.

Its subcellular location is the secreted. Its function is as follows. Involved in the biosynthesis of sinapoylated anthocyanins. The polypeptide is Serine carboxypeptidase-like 10 (SCPL10) (Arabidopsis thaliana (Mouse-ear cress)).